A 752-amino-acid chain; its full sequence is Complement C2 (752 aa).

The first 20 residues, 1 to 20 (MGPLMVLFCLLFLYPGLADS), serve as a signal peptide directing secretion. Sushi domains lie at 22–86 (PSCP…VCKP), 87–146 (VRCP…VCDN), and 149–206 (GHCP…ICRQ). 6 disulfides stabilise this stretch: C24–C64, C51–C84, C89–C131, C117–C144, C151–C191, and C177–C204. N-linked (GlcNAc...) asparagine glycosylation occurs at N29. N112 carries N-linked (GlcNAc...) asparagine glycosylation. One can recognise a VWFA domain in the interval 254–452 (NLYLLLDCSQ…KALHQVFEHM (199 aa)). An MIDAS-like motif motif is present at residues 260 to 264 (DCSQS). Mg(2+) contacts are provided by S262 and S264. 2 residues coordinate Mn(2+): S262 and S264. N-linked (GlcNAc...) asparagine glycans are attached at residues N290 and N333. T337 is a binding site for Mg(2+). T337 contributes to the Mn(2+) binding site. Intrachain disulfides connect C463–C581, C492–C508, and C584–C600. The Peptidase S1 domain maps to 464–744 (GVGNMSANAS…MQPWLRQHLG (281 aa)). 2 N-linked (GlcNAc...) asparagine glycosylation sites follow: N467 and N471. Residues H507 and D561 each act as charge relay system in the active site. An N-linked (GlcNAc...) asparagine glycan is attached at N621. Disulfide bonds link C638–C665 and C675–C705. An N-linked (GlcNAc...) (complex) asparagine glycan is attached at N651. Catalysis depends on S679, which acts as the Charge relay system.

The protein belongs to the peptidase S1 family. Serine protease component of the C3 convertase, also named C4bC2b, composed of the serine protease complement C2b and complement C4b. Serine protease component of the C5 convertase, also named C4bC2bC3b, composed of the serine protease complement C2b, complement C3b, as well as complement C4b. As to quaternary structure, (Microbial infection) Interacts with Schistosoma haematobium TOR (via N-terminal extracellular domain). This results in inhibition of the classical and lectin pathway of complement activation, probably due to interference with binding of C2a to C4b such that C3 convertase cannot be formed. This infers resistance to complement-mediated cell lysis, allowing parasite survival and infection. The cofactor is Mg(2+). Mn(2+) serves as cofactor. Post-translationally, cleaved and activated by different proteases depending on the complement pathway to generate complement C2a and serine protease complement C2b chains. Cleaved and activated by C1S following activation by the classical complement system. Cleaved and activated by MASP2 following activation by the lectin complement system. Cleaved and activated by GZMK following activation by the GZMK complement system.

The protein localises to the secreted. It is found in the cell surface. The catalysed reaction is Selective cleavage of Arg-|-Ser bond in complement component C3 alpha-chain to form C3a and C3b, and Arg-|-Xaa bond in complement component C5 alpha-chain to form C5a and C5b.. Its function is as follows. Precursor of the catalytic component of the C3 and C5 convertase complexes, which are part of the complement pathway, a cascade of proteins that leads to phagocytosis and breakdown of pathogens and signaling that strengthens the adaptive immune system. Component C2 is part of the classical, lectin and GZMK complement systems. In terms of biological role, catalytic component of the complement C3 and C5 convertase complexes. Following complement activation, recruited to the surface of pathogens by complement C4b opsonin to form the C3 convertase, or C3b and C4b opsonins to form the C5 convertase. As part of the C3 convertase, cleaves and activate C3 into C3a anaphylatoxin and C3b opsonin, the next components of the complement pathways. As part of the C5 convertase, cleaves and activate C5 into C5a anaphylatoxin and C5b component of the membrane attack complex. In Homo sapiens (Human), this protein is Complement C2.